The following is a 277-amino-acid chain: NADPH-dependent 7-cyano-7-deazaguanine reductase (277 aa).

Residue 86 to 88 (IES) coordinates substrate. 88–89 (SK) is an NADPH binding site. The Thioimide intermediate role is filled by Cys-185. Catalysis depends on Asp-192, which acts as the Proton donor. Residue 224–225 (HE) participates in substrate binding. 253–254 (RG) is a binding site for NADPH.

This sequence belongs to the GTP cyclohydrolase I family. QueF type 2 subfamily. Homodimer.

The protein resides in the cytoplasm. The catalysed reaction is 7-aminomethyl-7-carbaguanine + 2 NADP(+) = 7-cyano-7-deazaguanine + 2 NADPH + 3 H(+). Its pathway is tRNA modification; tRNA-queuosine biosynthesis. Catalyzes the NADPH-dependent reduction of 7-cyano-7-deazaguanine (preQ0) to 7-aminomethyl-7-deazaguanine (preQ1). The protein is NADPH-dependent 7-cyano-7-deazaguanine reductase of Hydrogenovibrio crunogenus (strain DSM 25203 / XCL-2) (Thiomicrospira crunogena).